Consider the following 157-residue polypeptide: MKVLEGSVAAPNAKVAVVIARFNSFINESLLEGAIDALKRIGQVKDENITIVRTPGAYELPLVARRLAESKKFDAIVALGTVIRGGTAHFEYVAGEASSGLGKVAMDAEIPVAFGVLTTENIEQAIERAGTKAGNKGAEAALTALEMVNLIQQIDAA.

Residues F22, 57-59 (AYE), and 81-83 (TVI) each bind 5-amino-6-(D-ribitylamino)uracil. Position 86–87 (86–87 (GT)) interacts with (2S)-2-hydroxy-3-oxobutyl phosphate. Catalysis depends on H89, which acts as the Proton donor. 5-amino-6-(D-ribitylamino)uracil is bound at residue F114. R128 contacts (2S)-2-hydroxy-3-oxobutyl phosphate.

It belongs to the DMRL synthase family. As to quaternary structure, forms an icosahedral capsid composed of 60 subunits, arranged as a dodecamer of pentamers.

The catalysed reaction is (2S)-2-hydroxy-3-oxobutyl phosphate + 5-amino-6-(D-ribitylamino)uracil = 6,7-dimethyl-8-(1-D-ribityl)lumazine + phosphate + 2 H2O + H(+). It participates in cofactor biosynthesis; riboflavin biosynthesis; riboflavin from 2-hydroxy-3-oxobutyl phosphate and 5-amino-6-(D-ribitylamino)uracil: step 1/2. Catalyzes the formation of 6,7-dimethyl-8-ribityllumazine by condensation of 5-amino-6-(D-ribitylamino)uracil with 3,4-dihydroxy-2-butanone 4-phosphate. This is the penultimate step in the biosynthesis of riboflavin. The protein is 6,7-dimethyl-8-ribityllumazine synthase of Haemophilus influenzae (strain ATCC 51907 / DSM 11121 / KW20 / Rd).